The sequence spans 282 residues: Stress response regulator protein 1 (282 aa).

Low complexity-rich tracts occupy residues 12–30 (NLSR…HSST) and 41–58 (SLDT…SNNN). Disordered stretches follow at residues 12–31 (NLSR…SSTV), 41–84 (SLDT…DDED), and 112–139 (LTPF…TTVV). Positions 66–77 (SDYNSYTHNQYY) are enriched in polar residues. A compositionally biased stretch (low complexity) spans 125–139 (SIISSKSSNKSTTVV). One can recognise a Response regulatory domain in the interval 155 to 273 (SFLIVDDNII…LDFMANSIDD (119 aa)). D206 bears the 4-aspartylphosphate mark.

Its function is as follows. Required for stress adaptation, morphogenesis and virulence. The chain is Stress response regulator protein 1 (SRR1) from Candida albicans (strain WO-1) (Yeast).